The sequence spans 352 residues: C-C chemokine receptor type 5 (352 aa).

At 1–30 (MDYQVSSPTYDIDYYTSEPCQKVNVKQIAA) the chain is on the extracellular side. Tyrosine 3 is modified (sulfotyrosine). Serine 6 and serine 7 each carry an O-linked (GalNAc...) serine glycan. Sulfotyrosine is present on residues tyrosine 10, tyrosine 14, and tyrosine 15. Intrachain disulfides connect cysteine 20/cysteine 269 and cysteine 101/cysteine 178. The chain crosses the membrane as a helical span at residues 31-58 (RLLPPLYSLVFIFGFVGNILVVLILINC). Residues 59–68 (KRLKSMTDIY) are Cytoplasmic-facing. The helical transmembrane segment at 69-89 (LLNLAISDLFFLLTVPFWAHY) threads the bilayer. The Extracellular portion of the chain corresponds to 90-102 (AAAQWDFGNTMCQ). Residues 103 to 124 (LLTGLYFIGFFSGIFFIILLTI) traverse the membrane as a helical segment. At 125-141 (DRYLAIVHAVFALKART) the chain is on the cytoplasmic side. The helical transmembrane segment at 142-166 (VTFGVVTSVITWVVAVFASLPGIIF) threads the bilayer. The Extracellular segment spans residues 167-198 (TRSQREGLHYTCSSHFPYSQYQFWKNFQTLKI). The chain crosses the membrane as a helical span at residues 199–218 (VILGLVLPLLVMVICYSGIL). Topologically, residues 219 to 235 (KTLLRCRNEKKRHRAVR) are cytoplasmic. Residues 236–260 (LIFTIMIVYFLFWAPYNIVLLLNTF) form a helical membrane-spanning segment. At 261–277 (QEFFGLNNCSSSNRLDQ) the chain is on the extracellular side. The chain crosses the membrane as a helical span at residues 278–301 (AMQVTETLGMTHCCINPIIYAFVG). The Cytoplasmic segment spans residues 302–352 (EKFRNYLLVFFQKHIAKRFCKCCSIFQQEAPERASSVYTRSTGEQETSVGL). S-palmitoyl cysteine attachment occurs at residues cysteine 321, cysteine 323, and cysteine 324. Phosphoserine; by BARK1 is present on residues serine 336, serine 337, serine 342, and serine 349.

Belongs to the G-protein coupled receptor 1 family. In terms of assembly, interacts with PRAF2. Efficient ligand binding to CCL3/MIP-1alpha and CCL4/MIP-1beta requires sulfation, O-glycosylation and sialic acid modifications. Glycosylation on Ser-6 is required for efficient binding of CCL4. Interacts with GRK2. Interacts with ARRB1 and ARRB2. Interacts with CNIH4. Interacts with S100A4; this interaction stimulates T-lymphocyte chemotaxis. Sulfated on at least 2 of the N-terminal tyrosines. Sulfation is required for efficient binding of the chemokines, CCL3 and CCL4. Post-translationally, palmitoylation in the C-terminal is important for cell surface expression. In terms of processing, phosphorylation on serine residues in the C-terminal is stimulated by binding CC chemokines especially by APO-RANTES. O-glycosylated, but not N-glycosylated. Ser-6 appears to be the major site even if Ser-7 may be also O-glycosylated. Also sialylated glycans present which contribute to chemokine binding. Thr-16 and Ser-17 may also be glycosylated and, if so, with small moieties such as a T-antigen.

The protein resides in the cell membrane. Receptor for a number of inflammatory CC-chemokines including CCL3/MIP-1-alpha, CCL4/MIP-1-beta and RANTES and subsequently transduces a signal by increasing the intracellular calcium ion level. May play a role in the control of granulocytic lineage proliferation or differentiation. Participates in T-lymphocyte migration to the infection site by acting as a chemotactic receptor. The chain is C-C chemokine receptor type 5 (CCR5) from Trachypithecus francoisi (Francois' leaf monkey).